Consider the following 501-residue polypeptide: Probable cytosol aminopeptidase (501 aa).

Lys268 and Asp273 together coordinate Mn(2+). Lys280 is a catalytic residue. Mn(2+) contacts are provided by Asp291, Asp350, and Glu352. Arg354 is a catalytic residue.

Belongs to the peptidase M17 family. Requires Mn(2+) as cofactor.

It localises to the cytoplasm. The enzyme catalyses Release of an N-terminal amino acid, Xaa-|-Yaa-, in which Xaa is preferably Leu, but may be other amino acids including Pro although not Arg or Lys, and Yaa may be Pro. Amino acid amides and methyl esters are also readily hydrolyzed, but rates on arylamides are exceedingly low.. It catalyses the reaction Release of an N-terminal amino acid, preferentially leucine, but not glutamic or aspartic acids.. Functionally, presumably involved in the processing and regular turnover of intracellular proteins. Catalyzes the removal of unsubstituted N-terminal amino acids from various peptides. The sequence is that of Probable cytosol aminopeptidase from Idiomarina loihiensis (strain ATCC BAA-735 / DSM 15497 / L2-TR).